The primary structure comprises 322 residues: Sideroflexin-1 (322 aa).

Position 2 is an N-acetylserine (serine 2). Topologically, residues 2–102 (SGELPPNINI…MSAQVPMNMT (101 aa)) are mitochondrial matrix. Residues 103-120 (ITGCMMTFYRTTPAVLFW) traverse the membrane as a helical segment. At 121-146 (QWINQSFNAVVNYTNRSGDAPLTVNE) the chain is on the mitochondrial intermembrane side. Residues 147–167 (LGTAYVSATTGAVATALGLNA) form a helical membrane-spanning segment. Topologically, residues 168-174 (LTKHVSP) are mitochondrial matrix. The helical transmembrane segment at 175–195 (LIGRFVPFAAVAAANCINIPL) threads the bilayer. Residues 196–228 (MRQRELRAGIPVTDENGNRLGESANAAKQAITQ) are Mitochondrial intermembrane-facing. The helical transmembrane segment at 229-249 (VVISRILMAAPGMAIPPFIMN) threads the bilayer. The Mitochondrial matrix segment spans residues 250 to 266 (TLEKKAFLKRFPWMSAP). A helical transmembrane segment spans residues 267-287 (IQVGLVGFCLVFATPLCCALF). Over 288–322 (PQKSSMSVTSLEAELQAKIRETSPELRRVYFNKGL) the chain is Mitochondrial intermembrane.

The protein belongs to the sideroflexin family.

The protein resides in the mitochondrion inner membrane. The enzyme catalyses L-serine(in) = L-serine(out). The catalysed reaction is L-alanine(in) = L-alanine(out). It carries out the reaction L-cysteine(in) = L-cysteine(out). Amino acid transporter importing serine, an essential substrate of the mitochondrial branch of the one-carbon pathway, into mitochondria. Mitochondrial serine is then converted to glycine and formate, which exits to the cytosol where it is used to generate the charged folates that serve as one-carbon donors. May also transport other amino acids including alanine and cysteine. The sequence is that of Sideroflexin-1 (SFXN1) from Sus scrofa (Pig).